The chain runs to 256 residues: Non-structural protein 1 (256 aa).

The protein resides in the host cytoplasm. It is found in the host perinuclear region. Its function is as follows. Plays a role in inhibition of the host innate immune system by counteracting the type I interferon signaling. The protein is Non-structural protein 1 of Infectious salmon anemia virus (isolate Atlantic salmon/Norway/810/9/99) (ISAV).